Consider the following 1450-residue polypeptide: MEAGYAEIAAVQFNIAGDNDHKRQGVMEVTISNLFEGTLPAEGGIYDARMGTTDHHYKCITCSHQRKQCMGHPGILQMHAPVLQPLFIAEIRRWLRVICLNCGAPIVDLKRYEHLIRPKRLAEAASSQTEGKQCYVCKVIHPKIIKDSEDYFTFWVDQQGKIDKLYPQIIREIFSRVTYDTVVKLGRSKNSHPEKLVLKAIQIPPISIRPGIRLGIGSGPQSFHDINNVIQYIVRKNLLIPKDLQIVRGQKIPLNVDRNLQTIQQLYYNFLLDSVSTTATQGGTGKRGIVMGARPAPSIMRRLPRKEGRIRKSLLGSQVWSISRSTICGNSDLHLDEVGYPISFARTLQVAETVQHYNINRLMPYFLNGKRQYPGCSRVYKQITQSVHDIEGLKQDFRLEVGDILYRDVVTGDVAFFNRQPSLERSSIGVHRIVVLENPKISTFQMNVSACAWYNADFDGDQMNLWVPWSVMSRVEAELLCSVRNWFISTKSSGPVNGQVQDSTVGSFLLTRTNTPMGKNVMNKLHAMGLFQTTQTDPPCFANYSPTDLLDGKLVVSMLLKQTPINYQRAPTWYSEVYAPYMHYNKQDISTQIRNGELIEGVLDKKAVGAGSSGGIYHLISRRYGPQQALKMIFATQQLALNYVRNAGFTVSTADMLLTPEAHQEVQEIINELLLESEEINNRLLHGDIMPPIGLTTHDFYEKLQLNALKFPDRILKPIMNSINPETNGLFQMVATGAKGSNPNMIHIMAGIGQIEINTQRIQPQFSFGRTLVYYPRFALEAQAYGFICNSYIAGLTSPEFIFGEMNGRFDLINKALSTSSTGYANRKAIFGLQSCIVDYYRRVSIDTRLVQQLYGEDGLDARQLETVRFETIMLSDQELEDKFKYTGIQSPLFEEEFSRLKKDRDKYRQIFLNIENFNFSQLLTDVRQVPVNVASIVKNILLSSTSGVLPFDEKSILQKYTMVKTFCKNLPYVFINNIQERLQTPIPVYLKRAASLMRILIRIELATVKTLNITCEQMSAILDLIRLQYTQSLINYGEAVGILAAQSVSEPLTQYMLDSHHRSVAGGTNKSGIVRPQEIFSAKPVEAEQSSEMLLRLKNPEVETNKTYAQEIANSIELITFERLILQWHLLYETYSSTKKNVMYPDFASDVEWMTDFLENHPLLQPPEDIANWCIRLELNKTTMILKSISLESIVNSLRAKHPNTYIMHSVENTASGIPIIIRIYLRESAFRRSTNTRMATDEKIAVNLVDKLLNSTIRGIPGIKNANVVKLMRHRVDAQGKLVRLDNIYAIKTNGTNIFGAMLDDNIDPYTIVSSSIGDTMELYGIEAARQKIISEIRTVMGDKGPNHRHLLMYADLMTRTGQVTSLEKAGLNAREPSNVLLRMALSSPVQVLTDAAIDSAVNPIYGIAAPTLMGSVPRIGTMYSDIIMDEKYITENYKSVDSMIDML.

It belongs to the RNA polymerase beta' chain family. In terms of assembly, part of the viral DNA-directed RNA polymerase that consists of 8 polII-like subunits (RPB1, RPB2, RPB3, RPB5, RPB6, RPB7, RPB9, RPB10), a capping enzyme and a termination factor.

It is found in the virion. The catalysed reaction is RNA(n) + a ribonucleoside 5'-triphosphate = RNA(n+1) + diphosphate. Functionally, catalytic component of the DNA-directed RNA polymerase (RNAP) that catalyzes the transcription in the cytoplasm of viral DNA into RNA using the four ribonucleoside triphosphates as substrates. Forms the polymerase active center together with RPB2. Part of the core element with the central large cleft, the clamp element that moves to open and close the cleft and the jaws that are thought to grab the incoming DNA template. The polypeptide is DNA-directed RNA polymerase RPB1 homolog (African swine fever virus (isolate Pig/Kenya/KEN-50/1950) (ASFV)).